Reading from the N-terminus, the 1171-residue chain is DNA-directed RNA polymerase subunit beta' (1171 aa).

Zn(2+) is bound by residues Cys-60, Cys-62, Cys-75, and Cys-78. The interval 299–319 (GRRGKPVTGPGNRPLKSLSDM) is disordered. Residues Asp-449, Asp-451, and Asp-453 each contribute to the Mg(2+) site. Zn(2+) contacts are provided by Cys-790, Cys-864, Cys-871, and Cys-874.

The protein belongs to the RNA polymerase beta' chain family. In terms of assembly, the RNAP catalytic core consists of 2 alpha, 1 beta, 1 beta' and 1 omega subunit. When a sigma factor is associated with the core the holoenzyme is formed, which can initiate transcription. Mg(2+) is required as a cofactor. The cofactor is Zn(2+).

It catalyses the reaction RNA(n) + a ribonucleoside 5'-triphosphate = RNA(n+1) + diphosphate. Its function is as follows. DNA-dependent RNA polymerase catalyzes the transcription of DNA into RNA using the four ribonucleoside triphosphates as substrates. The chain is DNA-directed RNA polymerase subunit beta' from Alkaliphilus metalliredigens (strain QYMF).